The primary structure comprises 700 residues: Polyribonucleotide nucleotidyltransferase (700 aa).

Mg(2+) is bound by residues Asp-487 and Asp-493. Positions Pro-554–Ile-613 constitute a KH domain. The S1 motif domain occupies Gly-623–Lys-691.

It belongs to the polyribonucleotide nucleotidyltransferase family. Component of the RNA degradosome, which is a multiprotein complex involved in RNA processing and mRNA degradation. Requires Mg(2+) as cofactor.

It is found in the cytoplasm. It carries out the reaction RNA(n+1) + phosphate = RNA(n) + a ribonucleoside 5'-diphosphate. In terms of biological role, involved in mRNA degradation. Catalyzes the phosphorolysis of single-stranded polyribonucleotides processively in the 3'- to 5'-direction. In Xylella fastidiosa (strain M12), this protein is Polyribonucleotide nucleotidyltransferase.